The following is an 849-amino-acid chain: A-kinase anchor protein 4 (849 aa).

Positions 1-188 are excised as a propeptide; that stretch reads MIAYCGTTTM…MAASKNTNNN (188 aa). Residues Ser96, Ser130, Ser190, and Ser204 each carry the phosphoserine modification. Positions 183 to 205 are enriched in polar residues; sequence KNTNNNQSPSNPATKSPSNQRSV. Residues 183 to 210 are disordered; that stretch reads KNTNNNQSPSNPATKSPSNQRSVATPEG. Thr207 carries the post-translational modification Phosphothreonine. Residues Ser213, Ser226, and Ser271 each carry the phosphoserine modification. A PKA-RI and PKA-RII subunit binding domain region spans residues 219-232; it reads FYVNRLSSLVIQMA. A Phosphotyrosine modification is found at Tyr301. Phosphoserine is present on residues Ser302, Ser341, Ser431, Ser442, Ser444, Ser463, Ser492, Ser497, and Ser504. A PKA-RI-alpha subunit binding domain region spans residues 335–344; that stretch reads YANQVASDMM. A Phosphothreonine modification is found at Thr506. Ser538 bears the Phosphoserine mark. The residue at position 583 (Ser583) is a Phosphoserine; by STK33. A phosphoserine mark is found at Ser628, Ser633, Ser652, and Ser702.

It belongs to the AKAP110 family. As to quaternary structure, interacts with PRKAR1A and PRKAR2A. Interacts with ENO4. Interacts with QRICH2. Post-translationally, phosphorylated by STK33 during sperm flagella assembly. In terms of tissue distribution, expressed in the fibrous sheath of spermatozoa (at protein level). Expressed in step 1 to step 6 spermatids, abundance then increases during steps 8 to 12, abundance decreases thereafter.

Its subcellular location is the cell projection. It localises to the cilium. The protein localises to the flagellum. In terms of biological role, major structural component of sperm fibrous sheath. Plays a role in sperm motility. The protein is A-kinase anchor protein 4 of Mus musculus (Mouse).